The following is a 428-amino-acid chain: MSSEVIKRENVEVTLKVVVEAAKFEEAINKAYNKMKSRFNIQGFRKGKAPRKIVEKFYGVEVFYEEAFNIVFPEVYEAALDEHNIDPVDHPKVDLEDIVAGQDVVFTAVVEVMPEFEVADYVGIEVEKKEYNVQEEDIQRELDGLAEKNSRMITVEDRAVKEGDMVIIDYKGMVDGIAFEGGTAERQSLTIGSGQFIPGFEEQLVGKNIGEEVEVQVTFPEEYHAEELAGKAAIFEVKIHEIKEKEVPVIDDEFAKDVSEFDTLEELTNDIKKNLEEDAKNRAIQEQRNDVIEAIANKVELEIPSAVVNRQIDNMLADFDYRLQFQGLNLEYYLQLTGTKEEDLREQMRPDAVKTVKNELILEKIGAKENIVATDEELEEQLEKMAKQYNQEIEKLKTNLRQQDLNAIKEGIIIRKTVDFLAENAKLI.

Positions 163-248 constitute a PPIase FKBP-type domain; the sequence is GDMVIIDYKG…IHEIKEKEVP (86 aa).

The protein belongs to the FKBP-type PPIase family. Tig subfamily.

The protein localises to the cytoplasm. It catalyses the reaction [protein]-peptidylproline (omega=180) = [protein]-peptidylproline (omega=0). Involved in protein export. Acts as a chaperone by maintaining the newly synthesized protein in an open conformation. Functions as a peptidyl-prolyl cis-trans isomerase. This Alkaliphilus oremlandii (strain OhILAs) (Clostridium oremlandii (strain OhILAs)) protein is Trigger factor.